We begin with the raw amino-acid sequence, 334 residues long: Testis-specific Y-encoded protein 1 (334 aa).

Residue S4 is modified to Phosphoserine. Disordered stretches follow at residues 27-46 (LEGE…PAGD) and 96-146 (NEGE…AERR). Basic and acidic residues-rich tracts occupy residues 96 to 108 (NEGE…KQEG) and 115 to 128 (ELEK…DSKD).

It belongs to the nucleosome assembly protein (NAP) family. Post-translationally, phosphorylated. As to expression, testis.

It localises to the cytoplasm. It is found in the nucleus. In terms of biological role, may be involved in sperm differentiation and proliferation. The chain is Testis-specific Y-encoded protein 1 (Tspy1) from Rattus norvegicus (Rat).